A 343-amino-acid chain; its full sequence is Zinc finger protein Gfi-1b (343 aa).

The interval 1-20 is mediates repression of transcription; it reads MPRSFLVKSKKTHTYNQHRY. The tract at residues 1–20 is SNAG domain; that stretch reads MPRSFLVKSKKTHTYNQHRY. The interval 51-77 is disordered; it reads STDPTEKQHTPENVITEEARSDPGDPR. A compositionally biased stretch (basic and acidic residues) spans 67–77; sequence EEARSDPGDPR. 6 C2H2-type zinc fingers span residues 176–199, 205–227, 233–255, 261–283, 289–311, and 317–340; these read YHCV…RRSH, FVCN…LNVH, FECK…LLIH, YPCQ…TYIH, HKCQ…SRKH, and FSCD…ENQH.

Its subcellular location is the nucleus. Essential transcriptional regulator necessary for development and differentiation of erythroid and megakaryocytic lineages. Alters histone methylation by recruiting histone methyltransferase to target genes promoters. Plays a role in heterochromatin formation. The sequence is that of Zinc finger protein Gfi-1b (gfi1b) from Xenopus laevis (African clawed frog).